The following is a 190-amino-acid chain: Endoribonuclease YbeY (190 aa).

The tract at residues 1–20 (MDVENDRPPRRGAAGERNSG) is disordered. 3 residues coordinate Zn(2+): histidine 147, histidine 151, and histidine 157.

The protein belongs to the endoribonuclease YbeY family. The cofactor is Zn(2+).

It is found in the cytoplasm. Single strand-specific metallo-endoribonuclease involved in late-stage 70S ribosome quality control and in maturation of the 3' terminus of the 16S rRNA. The protein is Endoribonuclease YbeY of Nitrobacter hamburgensis (strain DSM 10229 / NCIMB 13809 / X14).